A 379-amino-acid chain; its full sequence is Homoserine O-succinyltransferase (379 aa).

Positions 51–360 constitute an AB hydrolase-1 domain; the sequence is NAVLICHALS…DAPQGHDAFL (310 aa). S157 serves as the catalytic Nucleophile. R227 contributes to the substrate binding site. Catalysis depends on residues D323 and H356. D357 is a substrate binding site.

The protein belongs to the AB hydrolase superfamily. MetX family. Homodimer.

Its subcellular location is the cytoplasm. The catalysed reaction is L-homoserine + succinyl-CoA = O-succinyl-L-homoserine + CoA. It participates in amino-acid biosynthesis; L-methionine biosynthesis via de novo pathway; O-succinyl-L-homoserine from L-homoserine: step 1/1. Functionally, transfers a succinyl group from succinyl-CoA to L-homoserine, forming succinyl-L-homoserine. In Pseudomonas fluorescens (strain SBW25), this protein is Homoserine O-succinyltransferase.